Consider the following 345-residue polypeptide: Protein RecA (345 aa).

66–73 (GPESSGKT) contacts ATP.

Belongs to the RecA family.

The protein localises to the cytoplasm. Can catalyze the hydrolysis of ATP in the presence of single-stranded DNA, the ATP-dependent uptake of single-stranded DNA by duplex DNA, and the ATP-dependent hybridization of homologous single-stranded DNAs. It interacts with LexA causing its activation and leading to its autocatalytic cleavage. The protein is Protein RecA of Helicobacter hepaticus (strain ATCC 51449 / 3B1).